Here is a 231-residue protein sequence, read N- to C-terminus: Verlamelin biosynthesis protein B (231 aa).

It participates in secondary metabolite biosynthesis. Part of the gene cluster that mediates the biosynthesis of verlamelin, a lipopeptide that exhibits antifungal activity against plant pathogenic fungi. Verlamelin is a cyclic hexadepsipeptide and is bridged by ester bonding between a 5-hydroxytetradecanoic acid moiety and a carboxyl group on the terminal Val of amide-bonded tetradecanoyl-hexapeptide D-allo-Thr-D-Ala-L-Pro-L-Gln-D-Tyr-L-Val. VlmA and vlmB are altogether regarded as essential components in the biosynthesis of 5-hydroxytetradecanoic acid. VlmA catalyzes the hydroxylation at position C5 of tetradecanoic acid produced in primary metabolism, while the precise function of vlmB still remains to be solved. To be loaded onto the waiting NRPS, 5-hydroxytetradecanoic acid is activated in the form of acyladenylate by the AMP-dependent ligase vlmC. VlmS seems to accept the fatty-acyl intermediate onto the initial module to further elongate amino acid residues by the downstream modules. In addition, in the last module at its C-terminus, vlmS contains a surplus condensation (C) domain that may be involved in cyclization, the last step to form verlamelin. The sequence is that of Verlamelin biosynthesis protein B from Lecanicillium sp.